The primary structure comprises 545 residues: MAAKEVKFGRSAREKMLRGVDILADAVKVTLGPKGRNVVIDKSFGAPRITKDGVSVAKEIELEDKFENMGAQMVREVASKTNDIAGDGTTTATVLAQAIVREGAKAVAAGMNPMDLKRGIDLAVAEVVKDLLAKAKKINTSDEVAQVGTISANGEKQIGLDIAEAMQKVGNEGVITVEEAKTAETELEVVEGMQFDRGYLSPYFVTNPEKMVADLEDAFILLHEKKLSNLQAMLPVLEAVVQTGKPLLIIAEDVEGEALATLVVNKLRGGLKIAAVKAPGFGDRRKAMLEDIAILTGGTVISEDLGIKLESVTLDMLGRAKKVSITKENTTIVDGAGQKSDIEGRVAQIKAQIEETTSDYDREKLQERLAKLAGGVAVIRVGGATEVEVKEKKDRIDDALNATRAAVQEGIVPGGGVALLRSSVKITVKGENDDQDAGVNIVRRALQSPARQIVENAGDEASIVVGKILEKNTDDFGYNAQTGEYGDMIAMGIIDPVKVVRTALQDAASVASLLITTEAMIAELPKKDAPAMPGGMGGMGGMDMM.

ATP contacts are provided by residues 30–33, Lys51, 87–91, Gly415, and Asp495; these read TLGP and DGTTT.

It belongs to the chaperonin (HSP60) family. As to quaternary structure, forms a cylinder of 14 subunits composed of two heptameric rings stacked back-to-back. Interacts with the co-chaperonin GroES.

The protein resides in the cytoplasm. It carries out the reaction ATP + H2O + a folded polypeptide = ADP + phosphate + an unfolded polypeptide.. Functionally, together with its co-chaperonin GroES, plays an essential role in assisting protein folding. The GroEL-GroES system forms a nano-cage that allows encapsulation of the non-native substrate proteins and provides a physical environment optimized to promote and accelerate protein folding. The polypeptide is Chaperonin GroEL 1 (Rhizobium meliloti (strain 1021) (Ensifer meliloti)).